A 1001-amino-acid chain; its full sequence is Ribonuclease E/G-like protein, chloroplastic (1001 aa).

The N-terminal 48 residues, 1–48, are a transit peptide targeting the chloroplast; sequence MDVTEVPWRRLPQFSVSSRASWLVSSGFPLSSYMFSHVERGKTFRLTL. Residues 76-185 enclose the CBM20 domain; that stretch reads SRLKGLCEVV…KIIIRDSWMS (110 aa). Mg(2+) is bound at residue Asp755. The stretch at 769–789 forms a coiled coil; it reads QEKAILEVNLAAARQIAREIR. Residue Asp800 participates in Mg(2+) binding. Zn(2+) contacts are provided by Cys858 and Cys861.

It belongs to the RNase E/G family. Part of a chloroplastic degradosome-like complex. Interacts with RHON1. A homotetramer formed by a dimer of dimers. The cofactor is Mg(2+). Requires Zn(2+) as cofactor. As to expression, expressed in cotyledons, rosette and cauline leaves.

The protein resides in the plastid. Its subcellular location is the chloroplast stroma. Its function is as follows. Involved in intercistronic processing of primary transcripts from chloroplast operons. The endonucleolytic activity of the enzyme depends on the number of phosphates at the 5' end, is inhibited by structured RNA, and preferentially cleaves A/U-rich sequences. The chain is Ribonuclease E/G-like protein, chloroplastic (RNE) from Arabidopsis thaliana (Mouse-ear cress).